Reading from the N-terminus, the 297-residue chain is Bifunctional protein FolD 1 (297 aa).

Residues 174–176, Ser-199, and Ile-240 contribute to the NADP(+) site; that span reads GRS.

This sequence belongs to the tetrahydrofolate dehydrogenase/cyclohydrolase family. In terms of assembly, homodimer.

The enzyme catalyses (6R)-5,10-methylene-5,6,7,8-tetrahydrofolate + NADP(+) = (6R)-5,10-methenyltetrahydrofolate + NADPH. The catalysed reaction is (6R)-5,10-methenyltetrahydrofolate + H2O = (6R)-10-formyltetrahydrofolate + H(+). Its pathway is one-carbon metabolism; tetrahydrofolate interconversion. Functionally, catalyzes the oxidation of 5,10-methylenetetrahydrofolate to 5,10-methenyltetrahydrofolate and then the hydrolysis of 5,10-methenyltetrahydrofolate to 10-formyltetrahydrofolate. This is Bifunctional protein FolD 1 from Acinetobacter baylyi (strain ATCC 33305 / BD413 / ADP1).